A 290-amino-acid polypeptide reads, in one-letter code: Ribosomal RNA small subunit methyltransferase A (290 aa).

Positions 27, 29, 54, 75, 100, and 125 each coordinate S-adenosyl-L-methionine.

The protein belongs to the class I-like SAM-binding methyltransferase superfamily. rRNA adenine N(6)-methyltransferase family. RsmA subfamily.

It localises to the cytoplasm. It carries out the reaction adenosine(1518)/adenosine(1519) in 16S rRNA + 4 S-adenosyl-L-methionine = N(6)-dimethyladenosine(1518)/N(6)-dimethyladenosine(1519) in 16S rRNA + 4 S-adenosyl-L-homocysteine + 4 H(+). Its function is as follows. Specifically dimethylates two adjacent adenosines (A1518 and A1519) in the loop of a conserved hairpin near the 3'-end of 16S rRNA in the 30S particle. May play a critical role in biogenesis of 30S subunits. The sequence is that of Ribosomal RNA small subunit methyltransferase A from Streptococcus pyogenes serotype M3 (strain ATCC BAA-595 / MGAS315).